A 196-amino-acid chain; its full sequence is UPF0316 protein LBL_2483 (196 aa).

The next 3 helical transmembrane spans lie at 12–32 (YCVL…IGTI), 44–64 (IAAS…TQVI), and 70–90 (ALCY…GMIL).

The protein belongs to the UPF0316 family.

The protein localises to the cell membrane. The chain is UPF0316 protein LBL_2483 from Leptospira borgpetersenii serovar Hardjo-bovis (strain L550).